We begin with the raw amino-acid sequence, 567 residues long: Potassium-transporting ATPase potassium-binding subunit (567 aa).

12 helical membrane passes run Gly-5–Gly-25, Thr-64–Leu-84, Gly-136–Ile-156, Leu-179–Pro-199, Ile-254–Phe-274, Trp-285–Ala-305, Val-328–Val-350, Ile-375–Phe-395, Met-421–Leu-441, Ile-459–Thr-481, Ile-486–Ile-506, and Leu-529–Ala-549.

It belongs to the KdpA family. In terms of assembly, the system is composed of three essential subunits: KdpA, KdpB and KdpC.

Its subcellular location is the cell inner membrane. Functionally, part of the high-affinity ATP-driven potassium transport (or Kdp) system, which catalyzes the hydrolysis of ATP coupled with the electrogenic transport of potassium into the cytoplasm. This subunit binds the periplasmic potassium ions and delivers the ions to the membrane domain of KdpB through an intramembrane tunnel. This Rhizobium rhizogenes (strain K84 / ATCC BAA-868) (Agrobacterium radiobacter) protein is Potassium-transporting ATPase potassium-binding subunit.